The following is a 103-amino-acid chain: N(4)-acetylcytidine amidohydrolase (103 aa).

An ASCH domain is found at 6–101 (ITFFQRFQDD…QTQFYVIEFK (96 aa)). Residue K21 is the Proton acceptor of the active site. The active-site Nucleophile is T24. E74 serves as the catalytic Proton donor.

This sequence belongs to the N(4)-acetylcytidine amidohydrolase family.

It carries out the reaction N(4)-acetylcytidine + H2O = cytidine + acetate + H(+). The catalysed reaction is N(4)-acetyl-2'-deoxycytidine + H2O = 2'-deoxycytidine + acetate + H(+). It catalyses the reaction N(4)-acetylcytosine + H2O = cytosine + acetate + H(+). Its function is as follows. Catalyzes the hydrolysis of N(4)-acetylcytidine (ac4C). This chain is N(4)-acetylcytidine amidohydrolase (yqfB), found in Escherichia fergusonii (strain ATCC 35469 / DSM 13698 / CCUG 18766 / IAM 14443 / JCM 21226 / LMG 7866 / NBRC 102419 / NCTC 12128 / CDC 0568-73).